Reading from the N-terminus, the 584-residue chain is Potassium-transporting ATPase potassium-binding subunit (584 aa).

Helical transmembrane passes span 8-28 (FLVL…EFMF), 65-85 (SFAV…FILQ), 139-159 (VQNF…IYGF), 172-192 (VLLL…ALVL), 262-282 (FTDL…CFMF), 292-312 (GIAI…LGIW), 398-418 (GLYC…LMVG), 440-460 (ILIP…ITAG), 507-527 (MFVG…AFVA), and 544-564 (LFII…FLPA).

It belongs to the KdpA family. In terms of assembly, the system is composed of three essential subunits: KdpA, KdpB and KdpC.

The protein localises to the cell membrane. In terms of biological role, part of the high-affinity ATP-driven potassium transport (or Kdp) system, which catalyzes the hydrolysis of ATP coupled with the electrogenic transport of potassium into the cytoplasm. This subunit binds the extracellular potassium ions and delivers the ions to the membrane domain of KdpB through an intramembrane tunnel. This Methanoregula boonei (strain DSM 21154 / JCM 14090 / 6A8) protein is Potassium-transporting ATPase potassium-binding subunit.